A 65-amino-acid polypeptide reads, in one-letter code: Small ribosomal subunit protein bS21 (65 aa).

This sequence belongs to the bacterial ribosomal protein bS21 family.

This Trichlorobacter lovleyi (strain ATCC BAA-1151 / DSM 17278 / SZ) (Geobacter lovleyi) protein is Small ribosomal subunit protein bS21.